We begin with the raw amino-acid sequence, 275 residues long: Ribosomal RNA small subunit methyltransferase A (275 aa).

The S-adenosyl-L-methionine site is built by N19, L21, G46, E71, D94, and N117.

This sequence belongs to the class I-like SAM-binding methyltransferase superfamily. rRNA adenine N(6)-methyltransferase family. RsmA subfamily.

The protein resides in the cytoplasm. It catalyses the reaction adenosine(1518)/adenosine(1519) in 16S rRNA + 4 S-adenosyl-L-methionine = N(6)-dimethyladenosine(1518)/N(6)-dimethyladenosine(1519) in 16S rRNA + 4 S-adenosyl-L-homocysteine + 4 H(+). Its function is as follows. Specifically dimethylates two adjacent adenosines (A1518 and A1519) in the loop of a conserved hairpin near the 3'-end of 16S rRNA in the 30S particle. May play a critical role in biogenesis of 30S subunits. The chain is Ribosomal RNA small subunit methyltransferase A from Burkholderia pseudomallei (strain 668).